The primary structure comprises 337 residues: Anthraniloyl-CoA anthraniloyltransferase (337 aa).

Positions 29 and 33 each coordinate anthraniloyl-CoA. The Acyl-thioester intermediate role is filled by C113. Residues 154 to 155 (RN), 221 to 224 (MRGR), and H258 each bind anthraniloyl-CoA.

It belongs to the thiolase-like superfamily. FabH family. Homodimer.

It is found in the cytoplasm. It catalyses the reaction anthraniloyl-CoA + malonyl-CoA + H(+) = (2-aminobenzoyl)acetyl-CoA + CO2 + CoA. Its function is as follows. Required for the biosynthesis of a number of signaling molecules, such as the quinolone signal 2-heptyl-3-hydroxy-4(1H)-quinolone (PQS), 2-heptyl-4-hydroxyquinoline (HHQ) and 2,4-dihydroxyquinoline (DHQ). These molecules are required for normal biofilm formation. Catalyzes the transfer of the anthraniloyl moiety from anthraniloyl-CoA to malonyl-CoA to form 2-aminobenzoylacetyl-CoA. The first step of the reaction is the formation of a covalent anthraniloyl-PqsD intermediate. Next, the short-lived intermediate 3-(2-aminophenyl)-3-oxopropanoyl-CoA is formed. An intramolecular rearrangement of this intermediate can give rise to 2,4-dihydroxyquinoline (DHQ). This is Anthraniloyl-CoA anthraniloyltransferase (pqsD) from Pseudomonas aeruginosa (strain ATCC 15692 / DSM 22644 / CIP 104116 / JCM 14847 / LMG 12228 / 1C / PRS 101 / PAO1).